We begin with the raw amino-acid sequence, 596 residues long: Bromodomain-containing protein 9 (596 aa).

Basic residues predominate over residues 1–10; the sequence is MGKKHKKHKA. Disordered stretches follow at residues 1-26 and 38-137; these read MGKKHKKHKAEWRSSYEDYTDTPLEK and EVTE…AENE. Positions 50–62 are enriched in basic and acidic residues; sequence SYYDDRSDHERER. Ser56 bears the Phosphoserine mark. The span at 63–73 shows a compositional bias: basic residues; it reads HREKKKKKKKK. Residues 74 to 85 show a composition bias toward basic and acidic residues; it reads SEKEKHLDEEER. Basic residues predominate over residues 86–97; that stretch reads RKRKEEKKRKRE. The segment covering 111-126 has biased composition (basic and acidic residues); that stretch reads DPGKKVEVEPPPDRPV. One can recognise a Bromo domain in the interval 136–240; the sequence is NESTPIQRLL…HAGFKMMSKA (105 aa). Residues 214-216 form a histone H4K5ac H4K8ac and histone H4K5bu H4K8bu binding region; the sequence is TYN. Lys372 is subject to N6-acetyllysine; alternate. Lys372 is covalently cross-linked (Glycyl lysine isopeptide (Lys-Gly) (interchain with G-Cter in SUMO2); alternate). The interval 536–596 is disordered; the sequence is AQAERGGSRP…SPEPAAPAKN (61 aa). Low complexity predominate over residues 543-555; sequence SRPSSNLSSLSTA. Phosphoserine occurs at positions 565 and 587.

As to quaternary structure, binds acetylated histones H3 and H4. Binds butyrylated histone H4. Component of the multiprotein chromatin-remodeling subcomplex SWI/SNF called GBAF, which includes at least BICRA or BICRAL (mutually exclusive), BRD9, SS18, the core BAF subunits, SMARCA2/BRM, SMARCA4/BRG1/BAF190A, ACTL6A/BAF53, SMARCC1/BAF155, and SMARCD1/BAF60A. Interacts (via N-terminal bromodomain) with acetylated RAD54. Interacts (via C-terminus) with RAD51.

It localises to the nucleus. Plays a role in chromatin remodeling and regulation of transcription. Acts as a chromatin reader that recognizes and binds acylated histones: binds histones that are acetylated and/or butyrylated. Component of SWI/SNF chromatin remodeling subcomplex GBAF that carries out key enzymatic activities, changing chromatin structure by altering DNA-histone contacts within a nucleosome in an ATP-dependent manner. Also orchestrates the RAD51-RAD54 complex formation and thereby plays a role in homologous recombination (HR). The polypeptide is Bromodomain-containing protein 9 (Brd9) (Mus musculus (Mouse)).